Reading from the N-terminus, the 250-residue chain is Triosephosphate isomerase (250 aa).

8 to 10 (NWK) is a substrate binding site. The Electrophile role is filled by histidine 96. Glutamate 169 (proton acceptor) is an active-site residue. Substrate-binding positions include glycine 175, serine 214, and 235–236 (GG).

The protein belongs to the triosephosphate isomerase family. As to quaternary structure, homodimer.

It localises to the cytoplasm. The catalysed reaction is D-glyceraldehyde 3-phosphate = dihydroxyacetone phosphate. Its pathway is carbohydrate biosynthesis; gluconeogenesis. It participates in carbohydrate degradation; glycolysis; D-glyceraldehyde 3-phosphate from glycerone phosphate: step 1/1. Involved in the gluconeogenesis. Catalyzes stereospecifically the conversion of dihydroxyacetone phosphate (DHAP) to D-glyceraldehyde-3-phosphate (G3P). The protein is Triosephosphate isomerase of Oleidesulfovibrio alaskensis (strain ATCC BAA-1058 / DSM 17464 / G20) (Desulfovibrio alaskensis).